The sequence spans 435 residues: Zinc finger CCCH domain-containing protein 67 (435 aa).

Positions 1–91 (MSKPEETSDP…DQKEEEEGSE (91 aa)) are disordered. 3 C3H1-type zinc fingers span residues 101 to 129 (RPDS…HPVR), 148 to 176 (NPKL…HMKE), and 194 to 222 (RPGE…HPDP). The tract at residues 235–274 (GNNGGSFSPKAPSQASSTSWSSTRHMNGTGTAPFIPSMFP) is disordered. A compositionally biased stretch (low complexity) spans 247–256 (SQASSTSWSS). 2 consecutive C3H1-type zinc fingers follow at residues 334 to 362 (RPDQ…HPKN) and 380 to 408 (RPDQ…HSIP). The interval 412–435 (SPSSSQTVEARQVGANGNEDDSWH) is disordered.

The protein localises to the nucleus. The chain is Zinc finger CCCH domain-containing protein 67 from Arabidopsis thaliana (Mouse-ear cress).